A 2131-amino-acid chain; its full sequence is Nonribosomal peptide synthetase criC (2131 aa).

The interval Phe13–Arg407 is adenylation 1. The Carrier 1 domain maps to Ser525–Thr601. Ser562 carries the O-(pantetheine 4'-phosphoryl)serine modification. The segment at Arg598 to Thr627 is disordered. A condensation 1 region spans residues Pro625–Asp1018. The adenylation 2 stretch occupies residues Ala1069–Arg1447. The Carrier 2 domain maps to Ser1569 to Gln1647. Ser1607 is subject to O-(pantetheine 4'-phosphoryl)serine. Residues Ser1688 to Met2086 are condensation 2.

It belongs to the NRP synthetase family. The cofactor is pantetheine 4'-phosphate.

It catalyses the reaction L-tryptophan + L-alanine + 2 ATP = cyclo(L-tryptophyl-L-alanyl) + 2 ADP + 2 phosphate + 2 H(+). Its pathway is secondary metabolite biosynthesis. It participates in alkaloid biosynthesis. Functionally, nonribosomal peptide synthetase; part of the gene cluster that mediates the biosynthesis of echinulin family alkaloid. The pathway begins with the biosynthesis of the cyclic dipeptide cyclo-L-Trp-L-Ala (cyclo-TA) by the NRPS criC via condensation of L-alanine and L-tryptophan. The prenyltransferase criA then catalyzes the first prenylation step, a reverse prenylation reaction at C2, to yield preechinulin. Preechinulin is the substrate of the cytochrome P450 monooxygenase criE that catalyzes the formation of the double bond between C10 and C11 to produce neoechulin A. The unique prenyltransferase criF functions as a competitive enzyme with criE for preechinulin metabolization and uses preechinulin for effective regiospecific prenylations. Preechinulin is prenylated by criF at C5 or C7. C7-prenylation leads to accumulation of tardioxopiperazine B without further modification by criF. In contrast, the C5-prenylated tardioxopiperazine A can be prenylated again by criF, predominantly at C7 to form echinulin or less frequently at C4 to give variecolorin L. CriF also accepts neoechilunin A to produce varlecolorin G (prenylation at C5) or isoechinulin A (prenylation at C7). CriF further converts isoechinulin A into dehydroechinulin. Moreover, a yet unidentified enzyme can also convert neoechilunin A into neoechilunin B by introducing a double bond between positions C14 and C17 and thus provides a further substrate to criF for C5 and C7 prenylation. This chain is Nonribosomal peptide synthetase criC, found in Aspergillus cristatus (Chinese Fuzhuan brick tea-fermentation fungus).